Reading from the N-terminus, the 947-residue chain is Bifunctional glutamine synthetase adenylyltransferase/adenylyl-removing enzyme (947 aa).

Residues 1–440 (MTPLSSPLSQ…VFNELIGDDE (440 aa)) form an adenylyl removase region. The adenylyl transferase stretch occupies residues 450-947 (SEPWREVWQD…ASWRKWLVAV (498 aa)).

The protein belongs to the GlnE family. It depends on Mg(2+) as a cofactor.

The catalysed reaction is [glutamine synthetase]-O(4)-(5'-adenylyl)-L-tyrosine + phosphate = [glutamine synthetase]-L-tyrosine + ADP. It carries out the reaction [glutamine synthetase]-L-tyrosine + ATP = [glutamine synthetase]-O(4)-(5'-adenylyl)-L-tyrosine + diphosphate. Involved in the regulation of glutamine synthetase GlnA, a key enzyme in the process to assimilate ammonia. When cellular nitrogen levels are high, the C-terminal adenylyl transferase (AT) inactivates GlnA by covalent transfer of an adenylyl group from ATP to specific tyrosine residue of GlnA, thus reducing its activity. Conversely, when nitrogen levels are low, the N-terminal adenylyl removase (AR) activates GlnA by removing the adenylyl group by phosphorolysis, increasing its activity. The regulatory region of GlnE binds the signal transduction protein PII (GlnB) which indicates the nitrogen status of the cell. In Salmonella gallinarum (strain 287/91 / NCTC 13346), this protein is Bifunctional glutamine synthetase adenylyltransferase/adenylyl-removing enzyme.